The sequence spans 47 residues: Delta-stichotoxin-Hcr1d (47 aa).

3 cysteine pairs are disulfide-bonded: C3–C43, C5–C33, and C26–C44.

The protein belongs to the sea anemone sodium channel inhibitory toxin family. Type II subfamily.

The protein resides in the secreted. The protein localises to the nematocyst. In terms of biological role, binds to site 3 of voltage-gated sodium channels and inhibits the inactivation process. The chain is Delta-stichotoxin-Hcr1d from Radianthus crispa (Leathery sea anemone).